A 302-amino-acid chain; its full sequence is Glutamate/aspartate import solute-binding protein (302 aa).

A signal peptide spans 1–22 (MQLRKLTTAMLVMGLSAGLAHA).

The protein belongs to the bacterial solute-binding protein 3 family. The complex is composed of two ATP-binding proteins (GltL), two transmembrane proteins (GltJ and GltK) and a solute-binding protein (GltI).

The protein resides in the periplasm. In terms of biological role, part of the ABC transporter complex GltIJKL involved in glutamate and aspartate uptake. Binds to both glutamate and aspartate. In Salmonella typhimurium (strain LT2 / SGSC1412 / ATCC 700720), this protein is Glutamate/aspartate import solute-binding protein (gltI).